Consider the following 399-residue polypeptide: Phosphoglycerate kinase (399 aa).

Residues 22 to 24 (DFN), Arg38, 61 to 64 (HLGR), Arg120, and Arg153 each bind substrate. ATP contacts are provided by residues Lys206, Gly297, Glu328, and 354 to 357 (GGDT).

It belongs to the phosphoglycerate kinase family. Monomer.

Its subcellular location is the cytoplasm. It carries out the reaction (2R)-3-phosphoglycerate + ATP = (2R)-3-phospho-glyceroyl phosphate + ADP. It participates in carbohydrate degradation; glycolysis; pyruvate from D-glyceraldehyde 3-phosphate: step 2/5. The protein is Phosphoglycerate kinase of Campylobacter concisus (strain 13826).